We begin with the raw amino-acid sequence, 500 residues long: MTSALEKNRPGAAFAFDNSYAGLPQRFFAPQAPTPVAEPWLIKLNEPLAEELGLDVEVLRRDGAAIFSGNLVPEGALPLAMAYAGHQFGGFSPVLGDGRAILLGEVVGRNGKRYDIQLKGAGQTPFSRRGDGRAALGPVLREYIISEAMFALGIPATRALAAVTTGEPVYREEVLPGAVFTRVAASHIRVGTFQFFAARGDAEGVRALADYVIDRHYPELKEAENPYAALFEAVSERQAALIARWLHIGFIHGVMNTDNMTVSGETIDFGPCAFMDIYNPSTVFSSIDHHGRYAYANQPAIGQWNLARLGETLLPLIDADQDSAVDKANAVIRAYGERFQAHWLKGMRAKIGLEGEEDGDLELVQALLALMQAQGADFTLTFRRLSDLAGDDAAEPGFATSFREPDSSGEWLARWRGRLSRDPQTAAGRAAAMRSVNPVFIPRNHRVEQAIEAAVESADFSLFEALLKVLAKPYEDQPSFAAYMEPPKPNERVLQTFCGT.

ATP contacts are provided by glycine 96, glycine 98, arginine 99, lysine 119, aspartate 131, glycine 132, arginine 182, and arginine 189. Aspartate 258 functions as the Proton acceptor in the catalytic mechanism. Mg(2+) contacts are provided by asparagine 259 and aspartate 268. Aspartate 268 contacts ATP.

It belongs to the SELO family. Requires Mg(2+) as cofactor. Mn(2+) is required as a cofactor.

It catalyses the reaction L-seryl-[protein] + ATP = 3-O-(5'-adenylyl)-L-seryl-[protein] + diphosphate. The catalysed reaction is L-threonyl-[protein] + ATP = 3-O-(5'-adenylyl)-L-threonyl-[protein] + diphosphate. It carries out the reaction L-tyrosyl-[protein] + ATP = O-(5'-adenylyl)-L-tyrosyl-[protein] + diphosphate. The enzyme catalyses L-histidyl-[protein] + UTP = N(tele)-(5'-uridylyl)-L-histidyl-[protein] + diphosphate. It catalyses the reaction L-seryl-[protein] + UTP = O-(5'-uridylyl)-L-seryl-[protein] + diphosphate. The catalysed reaction is L-tyrosyl-[protein] + UTP = O-(5'-uridylyl)-L-tyrosyl-[protein] + diphosphate. Its function is as follows. Nucleotidyltransferase involved in the post-translational modification of proteins. It can catalyze the addition of adenosine monophosphate (AMP) or uridine monophosphate (UMP) to a protein, resulting in modifications known as AMPylation and UMPylation. This is Protein nucleotidyltransferase YdiU from Rhizobium etli (strain ATCC 51251 / DSM 11541 / JCM 21823 / NBRC 15573 / CFN 42).